Reading from the N-terminus, the 261-residue chain is Triosephosphate isomerase (261 aa).

A substrate-binding site is contributed by 10–12 (NWK). Residue His-100 is the Electrophile of the active site. The active-site Proton acceptor is the Glu-172. Substrate contacts are provided by residues Gly-178, Ser-218, and 239–240 (GG).

Belongs to the triosephosphate isomerase family. In terms of assembly, homodimer.

Its subcellular location is the cytoplasm. The enzyme catalyses D-glyceraldehyde 3-phosphate = dihydroxyacetone phosphate. Its pathway is carbohydrate biosynthesis; gluconeogenesis. It functions in the pathway carbohydrate degradation; glycolysis; D-glyceraldehyde 3-phosphate from glycerone phosphate: step 1/1. Its function is as follows. Involved in the gluconeogenesis. Catalyzes stereospecifically the conversion of dihydroxyacetone phosphate (DHAP) to D-glyceraldehyde-3-phosphate (G3P). In Nocardia farcinica (strain IFM 10152), this protein is Triosephosphate isomerase.